Here is a 292-residue protein sequence, read N- to C-terminus: Elongation factor Ts (292 aa).

Residues 81–84 are involved in Mg(2+) ion dislocation from EF-Tu; that stretch reads TDFV.

Belongs to the EF-Ts family.

It is found in the cytoplasm. Its function is as follows. Associates with the EF-Tu.GDP complex and induces the exchange of GDP to GTP. It remains bound to the aminoacyl-tRNA.EF-Tu.GTP complex up to the GTP hydrolysis stage on the ribosome. The polypeptide is Elongation factor Ts (Psychromonas ingrahamii (strain DSM 17664 / CCUG 51855 / 37)).